Consider the following 438-residue polypeptide: High-affinity gluconate transporter (438 aa).

13 helical membrane-spanning segments follow: residues 2–22 (PLVIVAIGVILLLLLMIRFKM), 23–43 (NGFIALVLVALAVGLMQGMPL), 52–72 (AGVGGTLGSLALIMGFGAMLG), 108–128 (VGFALFYEVGFVLMLPLVFTI), 134–154 (IPLLYVGVPMAAALSVTHGFL), 174–194 (TLLYGTILAIPTVILAGPVYA), 222–242 (FGVSVWTSLVPVVLMAMRAIA), 258–278 (FLGDPVMATLIAVLIAMFTFG), 292–312 (LVSSIKIIAMMLLIIGGGGAF), 327–347 (SMMHETNISPLLMAWSIAAVL), 349–369 (IALGSATVAAITAGGIAAPLI), 370–390 (ATTGVSPELMVIAVGSGSVIF), and 418–438 (MLETIISVCGLVGCLLLNMVI).

The protein belongs to the GntP permease family.

The protein resides in the cell inner membrane. It participates in carbohydrate acid metabolism; D-gluconate degradation. Functionally, part of the gluconate utilization system Gnt-I; high-affinity intake of gluconate. This is High-affinity gluconate transporter (gntT) from Escherichia coli (strain K12).